We begin with the raw amino-acid sequence, 79 residues long: Conotoxin Vi6.4 (79 aa).

Residues 1-22 form the signal peptide; that stretch reads MKLTCVLIITVLFLTASQLITA. A propeptide spanning residues 23–47 is cleaved from the precursor; sequence DYSGDKRQYRAVRLRDEMRNFKGAR. Intrachain disulfides connect Cys49–Cys62, Cys56–Cys67, and Cys61–Cys77. 2 positions are modified to 4-hydroxyproline: Pro60 and Pro63.

This sequence belongs to the conotoxin O1 superfamily. In terms of tissue distribution, expressed by the venom duct.

The protein localises to the secreted. Its function is as follows. Ion channel inhibitor that inhibits the increase in intracellular calcium upon depolarization in DRG neurons. In vivo, both intraperitoneal and intracranial injections into mice induce hyperactivity. In Conus virgo (Virgin cone), this protein is Conotoxin Vi6.4.